The sequence spans 144 residues: Granulocyte-macrophage colony-stimulating factor (144 aa).

The N-terminal stretch at 1-17 (MWLQNLLFLNTVVCSIS) is a signal peptide. O-linked (GalNAc...) serine glycans are attached at residues Ser22 and Ser24. Residue Thr27 is glycosylated (O-linked (GalNAc...) threonine). 3 N-linked (GlcNAc...) asparagine glycosylation sites follow: Asn44, Asn45, and Asn54. 2 disulfide bridges follow: Cys71-Cys113 and Cys105-Cys138.

This sequence belongs to the GM-CSF family. In terms of assembly, monomer. The signaling GM-CSF receptor complex is a dodecamer of two head-to-head hexamers of two alpha, two beta, and two ligand subunits.

Its subcellular location is the secreted. Cytokine that stimulates the growth and differentiation of hematopoietic precursor cells from various lineages, including granulocytes, macrophages, eosinophils and erythrocytes. The protein is Granulocyte-macrophage colony-stimulating factor (CSF2) of Felis catus (Cat).